The sequence spans 335 residues: Pregnancy-specific beta-1-glycoprotein 11 (335 aa).

A signal peptide spans 1–34; sequence MGPLSAPPCTEHIKWKGLLLTALLLNFWNLPTTA. The region spanning 35-144 is the Ig-like V-type domain; that stretch reads QVMIEAQPPK…TGYFTFTLYL (110 aa). N61, N104, and N111 each carry an N-linked (GlcNAc...) asparagine glycan. The Cell attachment site signature appears at 127–129; that stretch reads RGD. 2 consecutive Ig-like C2-type domains span residues 147–234 and 242–317; these read PKPS…VTLN and PRIF…TSLT. Cystine bridges form between C169/C217 and C261/C301.

The protein belongs to the immunoglobulin superfamily. CEA family.

It is found in the secreted. The chain is Pregnancy-specific beta-1-glycoprotein 11 (PSG11) from Homo sapiens (Human).